The primary structure comprises 372 residues: Molybdopterin synthase catalytic subunit (372 aa).

Residues 101 to 102, Lys117, and 124 to 126 each bind substrate; these read HR and KKE.

It belongs to the MoaE family. MOCS2B subfamily. Heterotetramer; composed of 2 small (Mocs2A) and 2 large (Mocs2B) subunits.

The protein resides in the cytoplasm. The enzyme catalyses 2 [molybdopterin-synthase sulfur-carrier protein]-C-terminal-Gly-aminoethanethioate + cyclic pyranopterin phosphate + H2O = molybdopterin + 2 [molybdopterin-synthase sulfur-carrier protein]-C-terminal Gly-Gly + 2 H(+). It functions in the pathway cofactor biosynthesis; molybdopterin biosynthesis. Its function is as follows. Catalytic subunit of the molybdopterin synthase complex, a complex that catalyzes the conversion of precursor Z into molybdopterin. Acts by mediating the incorporation of 2 sulfur atoms from thiocarboxylated Mocs2A into precursor Z to generate a dithiolene group. The chain is Molybdopterin synthase catalytic subunit from Drosophila willistoni (Fruit fly).